Consider the following 282-residue polypeptide: Probable endonuclease 4 (282 aa).

Zn(2+)-binding residues include histidine 66, histidine 106, glutamate 143, aspartate 176, histidine 179, histidine 213, aspartate 226, histidine 228, and glutamate 258.

This sequence belongs to the AP endonuclease 2 family. The cofactor is Zn(2+).

The enzyme catalyses Endonucleolytic cleavage to 5'-phosphooligonucleotide end-products.. Endonuclease IV plays a role in DNA repair. It cleaves phosphodiester bonds at apurinic or apyrimidinic (AP) sites, generating a 3'-hydroxyl group and a 5'-terminal sugar phosphate. In Aquifex aeolicus (strain VF5), this protein is Probable endonuclease 4.